Reading from the N-terminus, the 72-residue chain is Translation initiation factor IF-1 (72 aa).

Residues 1-72 (MTKEEAIEVD…SRGRIMFRER (72 aa)) form the S1-like domain.

The protein belongs to the IF-1 family. As to quaternary structure, component of the 30S ribosomal translation pre-initiation complex which assembles on the 30S ribosome in the order IF-2 and IF-3, IF-1 and N-formylmethionyl-tRNA(fMet); mRNA recruitment can occur at any time during PIC assembly.

Its subcellular location is the cytoplasm. Its function is as follows. One of the essential components for the initiation of protein synthesis. Stabilizes the binding of IF-2 and IF-3 on the 30S subunit to which N-formylmethionyl-tRNA(fMet) subsequently binds. Helps modulate mRNA selection, yielding the 30S pre-initiation complex (PIC). Upon addition of the 50S ribosomal subunit IF-1, IF-2 and IF-3 are released leaving the mature 70S translation initiation complex. This is Translation initiation factor IF-1 from Treponema pallidum (strain Nichols).